The primary structure comprises 384 residues: Homoserine O-succinyltransferase (384 aa).

The 311-residue stretch at 51–361 folds into the AB hydrolase-1 domain; that stretch reads NAILICHALS…ETSQGHDAFL (311 aa). Ser-157 acts as the Nucleophile in catalysis. Arg-227 serves as a coordination point for substrate. Catalysis depends on residues Asp-324 and His-357. Substrate is bound at residue Asp-358.

It belongs to the AB hydrolase superfamily. MetX family. As to quaternary structure, homodimer.

It is found in the cytoplasm. It carries out the reaction L-homoserine + succinyl-CoA = O-succinyl-L-homoserine + CoA. Its pathway is amino-acid biosynthesis; L-methionine biosynthesis via de novo pathway; O-succinyl-L-homoserine from L-homoserine: step 1/1. Functionally, transfers a succinyl group from succinyl-CoA to L-homoserine, forming succinyl-L-homoserine. In Alkalilimnicola ehrlichii (strain ATCC BAA-1101 / DSM 17681 / MLHE-1), this protein is Homoserine O-succinyltransferase.